The primary structure comprises 108 residues: Thioredoxin (108 aa).

Positions 2–108 constitute a Thioredoxin domain; it reads SDAILYVSDD…QLTAFLDSQL (107 aa). Cys-33 and Cys-36 are disulfide-bonded.

It belongs to the thioredoxin family.

Component of the thioredoxin-thioredoxin reductase system. Participates in various redox reactions through the reversible oxidation of its active center dithiol to a disulfide and catalyzes dithiol-disulfide exchange reactions. This Acidithiobacillus ferridurans protein is Thioredoxin (trxA).